Here is a 319-residue protein sequence, read N- to C-terminus: Aspartate carbamoyltransferase catalytic subunit (319 aa).

2 residues coordinate carbamoyl phosphate: arginine 65 and threonine 66. Lysine 93 is a binding site for L-aspartate. Carbamoyl phosphate-binding residues include arginine 115, histidine 149, and glutamine 152. Residues arginine 182 and arginine 237 each contribute to the L-aspartate site. Glycine 278 and proline 279 together coordinate carbamoyl phosphate.

The protein belongs to the aspartate/ornithine carbamoyltransferase superfamily. ATCase family. Heterododecamer (2C3:3R2) of six catalytic PyrB chains organized as two trimers (C3), and six regulatory PyrI chains organized as three dimers (R2).

It carries out the reaction carbamoyl phosphate + L-aspartate = N-carbamoyl-L-aspartate + phosphate + H(+). The protein operates within pyrimidine metabolism; UMP biosynthesis via de novo pathway; (S)-dihydroorotate from bicarbonate: step 2/3. In terms of biological role, catalyzes the condensation of carbamoyl phosphate and aspartate to form carbamoyl aspartate and inorganic phosphate, the committed step in the de novo pyrimidine nucleotide biosynthesis pathway. This is Aspartate carbamoyltransferase catalytic subunit from Dechloromonas aromatica (strain RCB).